A 310-amino-acid chain; its full sequence is Transcription factor LRL2 (310 aa).

Composition is skewed to low complexity over residues 1–20 (MNSSSLLTPSSSPSPHLQSP) and 104–126 (QTQTQSQATASATTGGATAQPQT). Disordered regions lie at residues 1–23 (MNSSSLLTPSSSPSPHLQSPATF) and 95–143 (FHLP…PHSI). The interval 136–149 (QATDPHSIAERLRR) is basic motif; degenerate. The region spanning 136 to 185 (QATDPHSIAERLRRERIAERMKSLQELVPNGNKTDKASMLDEIIDYVKFL) is the bHLH domain. The interval 150–185 (ERIAERMKSLQELVPNGNKTDKASMLDEIIDYVKFL) is helix-loop-helix motif. The interval 203 to 225 (ASSQISEDAGGSHENTSSSGEAK) is disordered.

In terms of assembly, homodimer. As to expression, expressed constitutively in roots, leaves, stems, and flowers.

It is found in the nucleus. Functionally, transcription factor that regulates the development of root hairs. Transcription factor that regulates the development of sperm cells. In Arabidopsis thaliana (Mouse-ear cress), this protein is Transcription factor LRL2.